Here is a 312-residue protein sequence, read N- to C-terminus: Phosphoribosylglycinamide formyltransferase, chloroplastic (312 aa).

The transit peptide at 1-73 (MEAQQIISRF…EVCSSSWRIW (73 aa)) directs the protein to the chloroplast. 109-111 (GSN) serves as a coordination point for N(1)-(5-phospho-beta-D-ribosyl)glycinamide. Residues Lys-162, 187-190 (LKLI), and Asn-204 contribute to the (6R)-10-formyltetrahydrofolate site. His-206 serves as the catalytic Proton donor. A (6R)-10-formyltetrahydrofolate-binding site is contributed by Asp-247. Position 276 (Glu-276) interacts with N(1)-(5-phospho-beta-D-ribosyl)glycinamide.

The protein belongs to the GART family.

Its subcellular location is the plastid. It localises to the chloroplast. It carries out the reaction N(1)-(5-phospho-beta-D-ribosyl)glycinamide + (6R)-10-formyltetrahydrofolate = N(2)-formyl-N(1)-(5-phospho-beta-D-ribosyl)glycinamide + (6S)-5,6,7,8-tetrahydrofolate + H(+). It participates in purine metabolism; IMP biosynthesis via de novo pathway; N(2)-formyl-N(1)-(5-phospho-D-ribosyl)glycinamide from N(1)-(5-phospho-D-ribosyl)glycinamide (10-formyl THF route): step 1/1. The polypeptide is Phosphoribosylglycinamide formyltransferase, chloroplastic (PUR3) (Vigna unguiculata (Cowpea)).